A 272-amino-acid chain; its full sequence is 2-succinyl-6-hydroxy-2,4-cyclohexadiene-1-carboxylate synthase (272 aa).

It belongs to the AB hydrolase superfamily. MenH family. In terms of assembly, monomer.

It carries out the reaction 5-enolpyruvoyl-6-hydroxy-2-succinyl-cyclohex-3-ene-1-carboxylate = (1R,6R)-6-hydroxy-2-succinyl-cyclohexa-2,4-diene-1-carboxylate + pyruvate. It participates in quinol/quinone metabolism; 1,4-dihydroxy-2-naphthoate biosynthesis; 1,4-dihydroxy-2-naphthoate from chorismate: step 3/7. It functions in the pathway quinol/quinone metabolism; menaquinone biosynthesis. Functionally, catalyzes a proton abstraction reaction that results in 2,5-elimination of pyruvate from 2-succinyl-5-enolpyruvyl-6-hydroxy-3-cyclohexene-1-carboxylate (SEPHCHC) and the formation of 2-succinyl-6-hydroxy-2,4-cyclohexadiene-1-carboxylate (SHCHC). The polypeptide is 2-succinyl-6-hydroxy-2,4-cyclohexadiene-1-carboxylate synthase (Yersinia pestis (strain Pestoides F)).